The sequence spans 269 residues: Auxin-responsive protein IAA26 (269 aa).

Residues 25-40 (YQEDKNNTDQEKKLEL) are compositionally biased toward basic and acidic residues. 2 disordered regions span residues 25–55 (YQED…HSAI) and 76–146 (CFNG…KQVE). An EAR-like (transcriptional repression) motif is present at residues 38 to 42 (LELRL). Composition is skewed to polar residues over residues 80-93 (NHFS…SVPH) and 117-136 (LAST…GQIN). Over residues 137–146 (KSDDGEKQVE) the composition is skewed to basic and acidic residues. A PB1 domain is found at 151–250 (GMFVKINMDG…SVKRLRVIKS (100 aa)).

This sequence belongs to the Aux/IAA family. In terms of assembly, homodimers and heterodimers. Interacts with phytochrome A. Interacts with TPL.

The protein resides in the nucleus. Functionally, aux/IAA proteins are short-lived transcriptional factors that function as repressors of early auxin response genes at low auxin concentrations. Repression is thought to result from the interaction with auxin response factors (ARFs), proteins that bind to the auxin-responsive promoter element (AuxRE). Formation of heterodimers with ARF proteins may alter their ability to modulate early auxin response genes expression. The polypeptide is Auxin-responsive protein IAA26 (IAA26) (Arabidopsis thaliana (Mouse-ear cress)).